The following is a 406-amino-acid chain: Phosphatidylinositol 5-phosphate 4-kinase type-2 alpha (406 aa).

Ala-2 bears the N-acetylalanine mark. Phosphothreonine is present on Thr-3. The residue at position 14 (Ser-14) is a Phosphoserine. The PIPK domain maps to 33-405; sequence ASDPLLSVLM…RFLDFIGHIL (373 aa). The required for interaction with PIP5K1A stretch occupies residues 59–65; the sequence is VMLMPDD. Residues Lys-89 and Lys-145 each carry the N6-acetyllysine modification. A disordered region spans residues 287 to 328; sequence EQEEVECEENEGEEEGESDGAHPIGTPPDSPGNTLNSSPPLA. The span at 289-304 shows a compositional bias: acidic residues; that stretch reads EEVECEENEGEEEGES.

Homodimer. Interacts with PIP4K2B; the interaction may regulate localization to the nucleus. Probably interacts with PIP5K1A; the interaction inhibits PIP5K1A kinase activity. Post-translationally, phosphorylated in tyrosines. Phosphorylation is induced by light and increases kinase activity.

The protein resides in the cell membrane. The protein localises to the nucleus. It is found in the lysosome. It localises to the cytoplasm. Its subcellular location is the photoreceptor inner segment. The protein resides in the cell projection. The protein localises to the cilium. It is found in the photoreceptor outer segment. It catalyses the reaction a 1,2-diacyl-sn-glycero-3-phospho-(1D-myo-inositol-5-phosphate) + ATP = a 1,2-diacyl-sn-glycero-3-phospho-(1D-myo-inositol-4,5-bisphosphate) + ADP + H(+). The enzyme catalyses 1,2-dihexadecanoyl-sn-glycero-3-phospho-(1D-myo-inositol-5-phosphate) + ATP = 1,2-dihexadecanoyl-sn-glycero-3-phospho-(1D-myo-inositol-4,5-bisphosphate) + ADP + H(+). The catalysed reaction is 1,2-dihexadecanoyl-sn-glycero-3-phospho-(1D-myo-inositol-5-phosphate) + GTP = 1,2-dihexadecanoyl-sn-glycero-3-phospho-(1D-myo-inositol-4,5-bisphosphate) + GDP + H(+). In rod outer segments, activated by light. Functionally, catalyzes the phosphorylation of phosphatidylinositol 5-phosphate (PtdIns5P) on the fourth hydroxyl of the myo-inositol ring, to form phosphatidylinositol 4,5-bisphosphate (PtdIns(4,5)P2). Has both ATP- and GTP-dependent kinase activities. May exert its function by regulating the levels of PtdIns5P, which functions in the cytosol by increasing AKT activity and in the nucleus signals through ING2. May regulate the pool of cytosolic PtdIns5P in response to the activation of tyrosine phosphorylation. Required for lysosome-peroxisome membrane contacts and intracellular cholesterol transport through modulating peroxisomal PtdIns(4,5)P2 level. In collaboration with PIP4K2B, has a role in mediating autophagy in times of nutrient stress. Required for autophagosome-lysosome fusion and the regulation of cellular lipid metabolism. Negatively regulates insulin signaling through a catalytic-independent mechanism. PIP4Ks interact with PIP5Ks and suppress PIP5K-mediated PtdIns(4,5)P2 synthesis and insulin-dependent conversion to PtdIns(3,4,5)P3. May be involved in thrombopoiesis, and the terminal maturation of megakaryocytes and regulation of their size. In Rattus norvegicus (Rat), this protein is Phosphatidylinositol 5-phosphate 4-kinase type-2 alpha.